The sequence spans 233 residues: Biosynthetic peptidoglycan transglycosylase (233 aa).

The chain crosses the membrane as a helical span at residues 8–28 (LIALPVGIFIFFNAYVYGNII).

Belongs to the glycosyltransferase 51 family.

The protein localises to the cell inner membrane. It catalyses the reaction [GlcNAc-(1-&gt;4)-Mur2Ac(oyl-L-Ala-gamma-D-Glu-L-Lys-D-Ala-D-Ala)](n)-di-trans,octa-cis-undecaprenyl diphosphate + beta-D-GlcNAc-(1-&gt;4)-Mur2Ac(oyl-L-Ala-gamma-D-Glu-L-Lys-D-Ala-D-Ala)-di-trans,octa-cis-undecaprenyl diphosphate = [GlcNAc-(1-&gt;4)-Mur2Ac(oyl-L-Ala-gamma-D-Glu-L-Lys-D-Ala-D-Ala)](n+1)-di-trans,octa-cis-undecaprenyl diphosphate + di-trans,octa-cis-undecaprenyl diphosphate + H(+). It participates in cell wall biogenesis; peptidoglycan biosynthesis. Functionally, peptidoglycan polymerase that catalyzes glycan chain elongation from lipid-linked precursors. The sequence is that of Biosynthetic peptidoglycan transglycosylase from Neisseria gonorrhoeae (strain NCCP11945).